Consider the following 573-residue polypeptide: BICD family-like cargo adapter 1 (573 aa).

The segment at 67–97 is disordered; that stretch reads ERPSDPGEHPQAEPGSLAEGAGPQPPPSQDP. The span at 68–77 shows a compositional bias: basic and acidic residues; the sequence is RPSDPGEHPQ. Positions 113-117 match the CC1 box motif; that stretch reads AARLG. The stretch at 118-376 forms a coiled coil; sequence KALLERNQDM…QLWEAYCQVR (259 aa). Positions 386 to 412 are disordered; sequence DSADSAVSTDSSMDESSETSSAKDVPA. Positions 387–396 are enriched in low complexity; the sequence is SADSAVSTDS. Positions 440-525 form a coiled coil; that stretch reads LSVEMTALKE…LEAWQDDMHR (86 aa).

It belongs to the BICDR family. Part of a tripartite complex with dynein and dynactin, acts an adapter linking the dynein motor complex and dynactin. Interacts with KIF1C. Interacts with RAB6A and RAB6B; interaction is specific to Rab6.

The protein resides in the cytoplasm. Its subcellular location is the cytoskeleton. It localises to the microtubule organizing center. It is found in the centrosome. Its function is as follows. Acts as an adapter protein linking the dynein motor complex to various cargos and converts dynein from a non-processive to a highly processive motor in the presence of dynactin. Facilitates the interaction between dynein and dynactin and activates dynein processivity (the ability to move along a microtubule for a long distance without falling off the track). Predominantly recruits 2 dyneins, which increases both the force and speed of the microtubule motor. Component of secretory vesicle machinery in developing neurons that acts as a regulator of neurite outgrowth. Regulates the secretory vesicle transport by controlling the accumulation of Rab6-containing secretory vesicles in the pericentrosomal region restricting anterograde secretory transport during the early phase of neuronal differentiation, thereby inhibiting neuritogenesis. The polypeptide is BICD family-like cargo adapter 1 (BICDL1) (Homo sapiens (Human)).